A 397-amino-acid chain; its full sequence is Intermediate capsid protein VP6 (397 aa).

Residues 62–73 (DFGLLGTTLLNL) form an interaction with the inner capsid protein VP2 region. His-153 contacts Zn(2+). Asn-266 and Asp-286 together coordinate Ca(2+).

This sequence belongs to the rotavirus VP6 family. Homotrimer. Interacts with the inner capsid protein VP2. Interacts with the outer capsid glycoprotein VP7. Interacts with the outer capsid protein VP5*. Post-translationally, the N-terminus is blocked. In terms of processing, sumoylated with SUMO1 and SUMO2. Sumoylation of viral proteins seems to have a positive role on viral replication.

The protein resides in the virion. Functionally, intermediate capsid protein that self assembles to form an icosahedral capsid with a T=13 symmetry, which consists of 230 trimers of VP6, with channels at each of its five-fold vertices. This capsid constitutes the middle concentric layer of the viral mature particle. The innermost VP2 capsid and the intermediate VP6 capsid remain intact following cell entry to protect the dsRNA from degradation and to prevent unfavorable antiviral responses in the host cell during all the replication cycle of the virus. Nascent transcripts are transcribed within the structural confines of this double-layered particle (DLP) and are extruded through the channels at the five-fold axes. VP6 is required for the transcription activity of the DLP. This Rotavirus A (strain RVA/Cow/France/RF/1975/G6P6[1]) (RV-A) protein is Intermediate capsid protein VP6.